We begin with the raw amino-acid sequence, 105 residues long: MADWNGEYISPYAEHGKKSELVKKITVSIPLKVLKVLTDERTRRQVNNLRHATNSELLCEAFLHAYTGQPLPTDEDLRKDRPDDIPAEAKRLMTEMGIEFESYDE.

This sequence belongs to the MetJ family. In terms of assembly, homodimer.

The protein resides in the cytoplasm. This regulatory protein, when combined with SAM (S-adenosylmethionine) represses the expression of the methionine regulon and of enzymes involved in SAM synthesis. This is Met repressor from Vibrio cholerae serotype O1 (strain ATCC 39541 / Classical Ogawa 395 / O395).